The primary structure comprises 207 residues: Large ribosomal subunit protein uL4 (207 aa).

The span at Asn43–Lys52 shows a compositional bias: polar residues. The interval Asn43–Arg72 is disordered. Residues Gly60–Gly71 show a composition bias toward basic residues.

This sequence belongs to the universal ribosomal protein uL4 family. In terms of assembly, part of the 50S ribosomal subunit.

Its function is as follows. One of the primary rRNA binding proteins, this protein initially binds near the 5'-end of the 23S rRNA. It is important during the early stages of 50S assembly. It makes multiple contacts with different domains of the 23S rRNA in the assembled 50S subunit and ribosome. Functionally, forms part of the polypeptide exit tunnel. In Alkaliphilus metalliredigens (strain QYMF), this protein is Large ribosomal subunit protein uL4.